A 257-amino-acid polypeptide reads, in one-letter code: ABC transporter ATP-binding protein YxdL (257 aa).

The 239-residue stretch at 5–243 (LEVKHINKTY…FYEQILDVLS (239 aa)) folds into the ABC transporter domain. 40–47 (GPSGSGKT) is an ATP binding site.

The protein belongs to the ABC transporter superfamily. As to quaternary structure, the complex is composed of two ATP-binding proteins (YxdL) and two transmembrane proteins (YxdM).

Part of the ABC transporter complex YxdLM which could be involved in peptide resistance. Responsible for energy coupling to the transport system. The protein is ABC transporter ATP-binding protein YxdL (yxdL) of Bacillus subtilis (strain 168).